A 952-amino-acid chain; its full sequence is Isoleucine--tRNA ligase (952 aa).

Positions 58–68 (PYANGDIHIGH) match the 'HIGH' region motif. L-isoleucyl-5'-AMP is bound at residue E576. Positions 617-621 (KMSKS) match the 'KMSKS' region motif. ATP is bound at residue K620. C915, C918, C935, and C938 together coordinate Zn(2+).

It belongs to the class-I aminoacyl-tRNA synthetase family. IleS type 1 subfamily. As to quaternary structure, monomer. The cofactor is Zn(2+).

Its subcellular location is the cytoplasm. It carries out the reaction tRNA(Ile) + L-isoleucine + ATP = L-isoleucyl-tRNA(Ile) + AMP + diphosphate. In terms of biological role, catalyzes the attachment of isoleucine to tRNA(Ile). As IleRS can inadvertently accommodate and process structurally similar amino acids such as valine, to avoid such errors it has two additional distinct tRNA(Ile)-dependent editing activities. One activity is designated as 'pretransfer' editing and involves the hydrolysis of activated Val-AMP. The other activity is designated 'posttransfer' editing and involves deacylation of mischarged Val-tRNA(Ile). The chain is Isoleucine--tRNA ligase from Aliivibrio fischeri (strain MJ11) (Vibrio fischeri).